The following is a 291-amino-acid chain: MIQDKSKGAKQTLLERPWFLAVALAGLIGGAMLITSFIRATDNTLSLCSTAKNTAASIAKYTATPIQLQSIVHYATSHTVPQQSFEEISISLNVLKERLPCNFLVFGLGRDSLMWASLNPGGTTVFLEEDPEWIEAVLKDAPSLRAHHVQYRTHLSEAGRLLSTYKNEPMCLPAKAFPIRYNEKCPLALTSLPDEFYDTEWDLIMVDAPKGYFPEAPGRMAAIFSSAIMARNRKGDGTTHVFLHDVNRKVENAFANEFLCEKYKVNSVGRLWHFEIPNAANMTDQPGDRFC.

A helical transmembrane segment spans residues 18–38 (WFLAVALAGLIGGAMLITSFI).

The protein belongs to the methyltransferase superfamily.

It is found in the golgi apparatus membrane. Functionally, involved in the methylation of glucuronic acid of different plant cell wall component, but mainly on side chains of arabinogalactans. The chain is Arabinogalactan O-methyltransferase 2 from Arabidopsis thaliana (Mouse-ear cress).